The sequence spans 138 residues: Small ribosomal subunit protein uS11c (138 aa).

Positions 1–24 are disordered; sequence MIKPIPRISSRRNGRIGSRKTGRR. Residues 9–24 are compositionally biased toward basic residues; that stretch reads SSRRNGRIGSRKTGRR.

This sequence belongs to the universal ribosomal protein uS11 family. Part of the 30S ribosomal subunit.

It is found in the plastid. It localises to the chloroplast. In Lemna minor (Common duckweed), this protein is Small ribosomal subunit protein uS11c.